Consider the following 142-residue polypeptide: Large ribosomal subunit protein uL13 (142 aa).

It belongs to the universal ribosomal protein uL13 family. Part of the 50S ribosomal subunit.

Its function is as follows. This protein is one of the early assembly proteins of the 50S ribosomal subunit, although it is not seen to bind rRNA by itself. It is important during the early stages of 50S assembly. In Tolumonas auensis (strain DSM 9187 / NBRC 110442 / TA 4), this protein is Large ribosomal subunit protein uL13.